A 685-amino-acid polypeptide reads, in one-letter code: Cilia- and flagella-associated protein 36 (685 aa).

The tract at residues 1–20 (MLRRFSKKNKNPEGGSDDAS) is disordered. Residues 197 to 242 (SEELEMMAQNSRIQREALEQEIRKEEILLQQALDEGARAQNQNQNQ) adopt a coiled-coil conformation. Residues 287-310 (TGTMTSSTGVSVGTLTNTGVSSGT) show a composition bias toward low complexity. A disordered region spans residues 287-573 (TGTMTSSTGV…LRGNKYDGDV (287 aa)). Over residues 363–372 (EAEKSKRERP) the composition is skewed to basic and acidic residues. The segment covering 410–434 (GTTSKKSIATVTASPEMSSKTTQME) has biased composition (polar residues). 2 stretches are compositionally biased toward basic and acidic residues: residues 439 to 456 (GEGKKRPETSKGANERKY) and 508 to 557 (HEPR…ESKP).

It belongs to the CFAP36 family. Expressed in amphid and phasmid ciliated neurons.

The protein localises to the cell projection. The protein resides in the cilium. It localises to the cytoplasm. Its subcellular location is the cytoskeleton. It is found in the cilium axoneme. This is Cilia- and flagella-associated protein 36 from Caenorhabditis elegans.